Here is an 838-residue protein sequence, read N- to C-terminus: Periplasmic nitrate reductase (838 aa).

The tat-type signal signal peptide spans M1 to A29. One can recognise a 4Fe-4S Mo/W bis-MGD-type domain in the interval L40 to D96. Positions 47, 50, 54, and 82 each coordinate [4Fe-4S] cluster. Residues K84, Q151, N176, C180, W213 to M220, S244 to H248, G263 to D265, M374, Q378, N484, S510 to D511, K533, D560, and T720 to S729 each bind Mo-bis(molybdopterin guanine dinucleotide). F796 is a substrate binding site. Positions 804 and 821 each coordinate Mo-bis(molybdopterin guanine dinucleotide).

Belongs to the prokaryotic molybdopterin-containing oxidoreductase family. NasA/NapA/NarB subfamily. Component of the periplasmic nitrate reductase NapAB complex composed of NapA and NapB. The cofactor is [4Fe-4S] cluster. Mo-bis(molybdopterin guanine dinucleotide) serves as cofactor. Predicted to be exported by the Tat system. The position of the signal peptide cleavage has not been experimentally proven.

Its subcellular location is the periplasm. The enzyme catalyses 2 Fe(II)-[cytochrome] + nitrate + 2 H(+) = 2 Fe(III)-[cytochrome] + nitrite + H2O. Functionally, catalytic subunit of the periplasmic nitrate reductase complex NapAB. Receives electrons from NapB and catalyzes the reduction of nitrate to nitrite. This Methylobacterium sp. (strain 4-46) protein is Periplasmic nitrate reductase.